A 306-amino-acid chain; its full sequence is Dermonecrotic toxin LarSicTox-alphaIB1ai (306 aa).

A signal peptide is located at residue valine 1. The propeptide occupies 2-27; the sequence is RATEKFASMYFFCHSPQSAETDVAER. Histidine 38 is a catalytic residue. Mg(2+)-binding residues include glutamate 58 and aspartate 60. Histidine 74 (nucleophile) is an active-site residue. Cystine bridges form between cysteine 78-cysteine 84 and cysteine 80-cysteine 223. Position 118 (aspartate 118) interacts with Mg(2+). N-linked (GlcNAc...) asparagine glycosylation is present at asparagine 283.

The protein belongs to the arthropod phospholipase D family. Class II subfamily. The cofactor is Mg(2+). As to expression, expressed by the venom gland.

Its subcellular location is the secreted. It catalyses the reaction an N-(acyl)-sphingosylphosphocholine = an N-(acyl)-sphingosyl-1,3-cyclic phosphate + choline. The enzyme catalyses an N-(acyl)-sphingosylphosphoethanolamine = an N-(acyl)-sphingosyl-1,3-cyclic phosphate + ethanolamine. The catalysed reaction is a 1-acyl-sn-glycero-3-phosphocholine = a 1-acyl-sn-glycero-2,3-cyclic phosphate + choline. It carries out the reaction a 1-acyl-sn-glycero-3-phosphoethanolamine = a 1-acyl-sn-glycero-2,3-cyclic phosphate + ethanolamine. Functionally, dermonecrotic toxins cleave the phosphodiester linkage between the phosphate and headgroup of certain phospholipids (sphingolipid and lysolipid substrates), forming an alcohol (often choline) and a cyclic phosphate. This toxin acts on sphingomyelin (SM). It may also act on ceramide phosphoethanolamine (CPE), lysophosphatidylcholine (LPC) and lysophosphatidylethanolamine (LPE), but not on lysophosphatidylserine (LPS), and lysophosphatidylglycerol (LPG). It acts by transphosphatidylation, releasing exclusively cyclic phosphate products as second products. Induces dermonecrosis, hemolysis, increased vascular permeability, edema, inflammatory response, and platelet aggregation. In Loxosceles arizonica (Arizona brown spider), this protein is Dermonecrotic toxin LarSicTox-alphaIB1ai.